Consider the following 147-residue polypeptide: Transcriptional regulator MraZ (147 aa).

2 SpoVT-AbrB domains span residues 5 to 52 (NHPT…PMEE) and 81 to 124 (GQVV…NAEH).

Belongs to the MraZ family. As to quaternary structure, forms oligomers.

Its subcellular location is the cytoplasm. It localises to the nucleoid. This is Transcriptional regulator MraZ from Koribacter versatilis (strain Ellin345).